A 348-amino-acid chain; its full sequence is Small ribosomal subunit protein mS45 (348 aa).

The segment covering 37 to 57 (SCSSSSPQSSQPTTHQQQCSS) has biased composition (low complexity). The segment at 37-63 (SCSSSSPQSSQPTTHQQQCSSFSTTAP) is disordered.

The protein belongs to the mitochondrion-specific ribosomal protein mS45 family. In terms of assembly, component of the mitochondrial small ribosomal subunit (mt-SSU). Mature N.crassa 74S mitochondrial ribosomes consist of a small (37S) and a large (54S) subunit. The 37S small subunit contains a 16S ribosomal RNA (16S mt-rRNA) and 32 different proteins. The 54S large subunit contains a 23S rRNA (23S mt-rRNA) and 42 different proteins.

The protein resides in the mitochondrion. Its function is as follows. Component of the mitochondrial ribosome (mitoribosome), a dedicated translation machinery responsible for the synthesis of mitochondrial genome-encoded proteins, including at least some of the essential transmembrane subunits of the mitochondrial respiratory chain. The mitoribosomes are attached to the mitochondrial inner membrane and translation products are cotranslationally integrated into the membrane. The protein is Small ribosomal subunit protein mS45 (mrps35) of Neurospora crassa (strain ATCC 24698 / 74-OR23-1A / CBS 708.71 / DSM 1257 / FGSC 987).